Consider the following 28-residue polypeptide: Dermaseptin-2.2TR (28 aa).

Expressed by the skin glands.

The protein localises to the secreted. Functionally, has antimicrobial activity. This Phyllomedusa trinitatis (Trinidad leaf frog) protein is Dermaseptin-2.2TR.